Reading from the N-terminus, the 323-residue chain is Conjugal transfer protein TrbB (323 aa).

151-158 (GGTGSGKT) contacts ATP.

It belongs to the GSP E family.

The protein localises to the cytoplasm. The chain is Conjugal transfer protein TrbB (trbB) from Rhizobium radiobacter (Agrobacterium tumefaciens).